The primary structure comprises 78 residues: Large ribosomal subunit protein bL28 (78 aa).

It belongs to the bacterial ribosomal protein bL28 family.

This is Large ribosomal subunit protein bL28 from Pectobacterium carotovorum subsp. carotovorum (strain PC1).